The primary structure comprises 290 residues: Bifunctional protein FolD (290 aa).

NADP(+) is bound by residues 166–168, Ser-191, and Ile-232; that span reads GQS.

This sequence belongs to the tetrahydrofolate dehydrogenase/cyclohydrolase family. In terms of assembly, homodimer.

It catalyses the reaction (6R)-5,10-methylene-5,6,7,8-tetrahydrofolate + NADP(+) = (6R)-5,10-methenyltetrahydrofolate + NADPH. The catalysed reaction is (6R)-5,10-methenyltetrahydrofolate + H2O = (6R)-10-formyltetrahydrofolate + H(+). It participates in one-carbon metabolism; tetrahydrofolate interconversion. Its function is as follows. Catalyzes the oxidation of 5,10-methylenetetrahydrofolate to 5,10-methenyltetrahydrofolate and then the hydrolysis of 5,10-methenyltetrahydrofolate to 10-formyltetrahydrofolate. The sequence is that of Bifunctional protein FolD from Halorhodospira halophila (strain DSM 244 / SL1) (Ectothiorhodospira halophila (strain DSM 244 / SL1)).